Consider the following 88-residue polypeptide: Small ribosomal subunit protein bS16 (88 aa).

Belongs to the bacterial ribosomal protein bS16 family.

This chain is Small ribosomal subunit protein bS16, found in Geobacter sulfurreducens (strain ATCC 51573 / DSM 12127 / PCA).